Here is a 260-residue protein sequence, read N- to C-terminus: NAD-capped RNA hydrolase NudC (260 aa).

K25 and R69 together coordinate substrate. Residues C98 and C101 each coordinate Zn(2+). E111 is a substrate binding site. C116 and C119 together coordinate Zn(2+). Substrate is bound at residue Y124. Residues 125–248 (PQIAPCVIVA…TVARRLIEDT (124 aa)) form the Nudix hydrolase domain. A divalent metal cation is bound by residues A158, E174, and E178. The short motif at 159–180 (GFVEVGETLEQAVSREVLEESN) is the Nudix box element. Residue 192–199 (QPWPFPHS) participates in substrate binding. E219 contacts a divalent metal cation. Residue A241 participates in substrate binding.

Belongs to the Nudix hydrolase family. NudC subfamily. In terms of assembly, homodimer. It depends on Mg(2+) as a cofactor. Requires Mn(2+) as cofactor. Zn(2+) is required as a cofactor.

It catalyses the reaction a 5'-end NAD(+)-phospho-ribonucleoside in mRNA + H2O = a 5'-end phospho-adenosine-phospho-ribonucleoside in mRNA + beta-nicotinamide D-ribonucleotide + 2 H(+). The catalysed reaction is NAD(+) + H2O = beta-nicotinamide D-ribonucleotide + AMP + 2 H(+). The enzyme catalyses NADH + H2O = reduced beta-nicotinamide D-ribonucleotide + AMP + 2 H(+). Its function is as follows. mRNA decapping enzyme that specifically removes the nicotinamide adenine dinucleotide (NAD) cap from a subset of mRNAs by hydrolyzing the diphosphate linkage to produce nicotinamide mononucleotide (NMN) and 5' monophosphate mRNA. The NAD-cap is present at the 5'-end of some mRNAs and stabilizes RNA against 5'-processing. Has preference for mRNAs with a 5'-end purine. Catalyzes the hydrolysis of a broad range of dinucleotide pyrophosphates. The protein is NAD-capped RNA hydrolase NudC of Yersinia pseudotuberculosis serotype O:1b (strain IP 31758).